A 147-amino-acid chain; its full sequence is Spermidine export protein MdtJ (147 aa).

A run of 4 helical transmembrane segments spans residues 1 to 21, 31 to 51, 54 to 74, and 81 to 101; these read MIYWIFLGLAIIAEIIGTLSM, TGHVVMYFMITGSYVMLSLAV, VALGVAYALWEGIGILIITIF, and ETLSPLKIAGLVTLIGGILLV. Residues 105–117 show a composition bias toward basic residues; it reads TRKPKQPNRHRGN. The segment at 105–147 is disordered; the sequence is TRKPKQPNRHRGNRPPSVQGLKTQTTGHHKGVAVESGEHHAAA.

This sequence belongs to the drug/metabolite transporter (DMT) superfamily. Small multidrug resistance (SMR) (TC 2.A.7.1) family. MdtJ subfamily. Forms a complex with MdtI.

It localises to the cell inner membrane. Functionally, catalyzes the excretion of spermidine. The sequence is that of Spermidine export protein MdtJ from Yersinia pseudotuberculosis serotype IB (strain PB1/+).